A 336-amino-acid chain; its full sequence is Dihydroorotate dehydrogenase (quinone) (336 aa).

Residues 62 to 66 and T86 each bind FMN; that span reads AGLDK. K66 is a binding site for substrate. Residue 111–115 coordinates substrate; it reads NRMGF. Positions 139 and 172 each coordinate FMN. N172 lines the substrate pocket. The active-site Nucleophile is the S175. Residue N177 participates in substrate binding. FMN contacts are provided by K217 and T245. 246 to 247 lines the substrate pocket; sequence NT. FMN-binding positions include G268, G297, and 318-319; that span reads YS.

It belongs to the dihydroorotate dehydrogenase family. Type 2 subfamily. As to quaternary structure, monomer. FMN serves as cofactor.

Its subcellular location is the cell membrane. The catalysed reaction is (S)-dihydroorotate + a quinone = orotate + a quinol. The protein operates within pyrimidine metabolism; UMP biosynthesis via de novo pathway; orotate from (S)-dihydroorotate (quinone route): step 1/1. Catalyzes the conversion of dihydroorotate to orotate with quinone as electron acceptor. This is Dihydroorotate dehydrogenase (quinone) from Citrobacter koseri (strain ATCC BAA-895 / CDC 4225-83 / SGSC4696).